Here is a 598-residue protein sequence, read N- to C-terminus: Probable translation initiation factor IF-2 (598 aa).

Positions 8–226 (IRQPIISVLG…VTGLAQRFLE (219 aa)) constitute a tr-type G domain. Residues 17–24 (GHVDHGKT) are G1. GTP is bound at residue 17–24 (GHVDHGKT). Residues 42-46 (GITQH) are G2. The interval 81–84 (DTPG) is G3. Residues 81–85 (DTPGH) and 135–138 (NKVD) each bind GTP. The segment at 135–138 (NKVD) is G4. A G5 region spans residues 203 to 205 (SGV).

This sequence belongs to the TRAFAC class translation factor GTPase superfamily. Classic translation factor GTPase family. IF-2 subfamily.

Its function is as follows. Function in general translation initiation by promoting the binding of the formylmethionine-tRNA to ribosomes. Seems to function along with eIF-2. The polypeptide is Probable translation initiation factor IF-2 (Methanopyrus kandleri (strain AV19 / DSM 6324 / JCM 9639 / NBRC 100938)).